Here is a 142-residue protein sequence, read N- to C-terminus: Transcriptional regulator MraZ (142 aa).

SpoVT-AbrB domains lie at 5–47 and 76–119; these read NYQH…TNQE and SLTV…DINA.

Belongs to the MraZ family. In terms of assembly, forms oligomers.

The protein resides in the cytoplasm. It localises to the nucleoid. This is Transcriptional regulator MraZ from Mycoplasmoides gallisepticum (strain R(low / passage 15 / clone 2)) (Mycoplasma gallisepticum).